The sequence spans 465 residues: UDP-N-acetylmuramate--L-alanine ligase (465 aa).

112–118 (GTHGKTT) is an ATP binding site.

The protein belongs to the MurCDEF family.

It is found in the cytoplasm. The catalysed reaction is UDP-N-acetyl-alpha-D-muramate + L-alanine + ATP = UDP-N-acetyl-alpha-D-muramoyl-L-alanine + ADP + phosphate + H(+). The protein operates within cell wall biogenesis; peptidoglycan biosynthesis. Its function is as follows. Cell wall formation. The protein is UDP-N-acetylmuramate--L-alanine ligase of Burkholderia pseudomallei (strain 1106a).